Consider the following 319-residue polypeptide: tRNA pseudouridine synthase B (319 aa).

Aspartate 49 acts as the Nucleophile in catalysis.

This sequence belongs to the pseudouridine synthase TruB family. Type 1 subfamily.

The enzyme catalyses uridine(55) in tRNA = pseudouridine(55) in tRNA. Functionally, responsible for synthesis of pseudouridine from uracil-55 in the psi GC loop of transfer RNAs. The protein is tRNA pseudouridine synthase B of Aeromonas salmonicida (strain A449).